The primary structure comprises 458 residues: Exodeoxyribonuclease 7 large subunit (458 aa).

The protein belongs to the XseA family. In terms of assembly, heterooligomer composed of large and small subunits.

The protein localises to the cytoplasm. The enzyme catalyses Exonucleolytic cleavage in either 5'- to 3'- or 3'- to 5'-direction to yield nucleoside 5'-phosphates.. Functionally, bidirectionally degrades single-stranded DNA into large acid-insoluble oligonucleotides, which are then degraded further into small acid-soluble oligonucleotides. In Stutzerimonas stutzeri (strain A1501) (Pseudomonas stutzeri), this protein is Exodeoxyribonuclease 7 large subunit.